The sequence spans 638 residues: Sodium- and chloride-dependent glycine transporter 1 (638 aa).

Positions 1–29 (MAAAQGPVAPSSLEQNGAVPSEATKKDQN) are disordered. The Cytoplasmic segment spans residues 1-40 (MAAAQGPVAPSSLEQNGAVPSEATKKDQNLKRGNWGNQIE). Transmembrane regions (helical) follow at residues 41–61 (FVLT…FPYL), 69–88 (AFMF…LFFM), and 112–132 (GVGY…NVVI). At 133 to 219 (CIAFYYFFSS…DDIGNFGEVR (87 aa)) the chain is on the extracellular side. N-linked (GlcNAc...) asparagine glycosylation is found at Asn-169, Asn-172, Asn-182, and Asn-188. The next 9 helical transmembrane spans lie at 220 to 238 (LPLL…LCLI), 247 to 264 (VVYF…ILFI), 300 to 317 (IFYS…MASY), 329 to 350 (VIIS…FSIL), 383 to 402 (LPIS…LLGL), 431 to 449 (YVTL…PLTS), 465 to 485 (SFSL…IYGH), 506 to 525 (ICWR…FSVI), and 544 to 562 (IGFL…YALF). The Cytoplasmic segment spans residues 563–638 (QFCRTDGDTL…GSSRFQDSRI (76 aa)). Residues 597-638 (RYAPTTTPSPEDGLEVQPLHPDKAQIPMVGSNGSSRFQDSRI) form a disordered region. At Thr-603 the chain carries Phosphothreonine. A phosphoserine mark is found at Ser-605 and Ser-630. The interval 627–638 (SNGSSRFQDSRI) is essential for interaction with EXOC1. Over residues 627 to 638 (SNGSSRFQDSRI) the composition is skewed to polar residues.

The protein belongs to the sodium:neurotransmitter symporter (SNF) (TC 2.A.22) family. SLC6A9 subfamily. Interacts with EXOC1; interaction increases the transporter capacity of SLC6A9 probably by promoting its insertion into the cell membrane. Interacts with EXOC3 and EXOC4.

Its subcellular location is the cell membrane. The catalysed reaction is glycine(out) + chloride(out) + 2 Na(+)(out) = glycine(in) + chloride(in) + 2 Na(+)(in). Functionally, sodium- and chloride-dependent glycine transporter which is essential for regulating glycine concentrations at inhibitory glycinergic synapses. The protein is Sodium- and chloride-dependent glycine transporter 1 (SLC6A9) of Bos taurus (Bovine).